The chain runs to 388 residues: Na(+)/H(+) antiporter NhaA (388 aa).

11 helical membrane passes run 14 to 34, 59 to 79, 95 to 115, 125 to 145, 154 to 174, 179 to 199, 219 to 239, 254 to 274, 292 to 312, 328 to 348, and 356 to 376; these read GGII…MGAT, MLLW…GLEV, VFPV…YLAF, GWAI…ALLG, IFLM…IALF, LSIV…LLNL, VLKS…FIPL, ILHP…NAGV, IIAG…WLAL, IMAV…IASL, and ALIN…AVVG.

Belongs to the NhaA Na(+)/H(+) (TC 2.A.33) antiporter family.

Its subcellular location is the cell inner membrane. The enzyme catalyses Na(+)(in) + 2 H(+)(out) = Na(+)(out) + 2 H(+)(in). In terms of biological role, na(+)/H(+) antiporter that extrudes sodium in exchange for external protons. The sequence is that of Na(+)/H(+) antiporter NhaA from Salmonella arizonae (strain ATCC BAA-731 / CDC346-86 / RSK2980).